The chain runs to 387 residues: Beta-carotene 4-ketolase (387 aa).

The disordered stretch occupies residues 1 to 78 (MPHSIDMEDS…GNPTVDDASQ (78 aa)). Composition is skewed to polar residues over residues 43–53 (NWQTQYHSSEG) and 65–78 (DATTGNPTVDDASQ).

It carries out the reaction echinenone + 2 AH2 + 2 O2 = canthaxanthin + 2 A + 3 H2O. The enzyme catalyses all-trans-beta-carotene + 2 AH2 + 2 O2 = echinenone + 2 A + 3 H2O. Its pathway is carotenoid biosynthesis. Functionally, involved in the biosynthesis of ketocarotenoids which are powerful anti-oxidative molecules. Catalyzes the conversion of beta-carotene to canthaxanthin via echinenone. The protein is Beta-carotene 4-ketolase of Protosiphon botryoides (Green alga).